The primary structure comprises 92 residues: YcgL domain-containing protein Sbal_1869 (92 aa).

A YcgL domain is found at 1–85 (MLCAVYKSSR…PQVNLLAEHK (85 aa)).

The protein is YcgL domain-containing protein Sbal_1869 of Shewanella baltica (strain OS155 / ATCC BAA-1091).